The sequence spans 232 residues: Ferric nitrobindin-like protein (232 aa).

Residues 1–10 (MSENETSKTG) show a composition bias toward polar residues. Residues 1 to 33 (MSENETSKTGGNAGVPGSGADAPSLSDSPAISG) form a disordered region. Residues 85–91 (GVWRGEG) carry the GXWXGXG motif.

The protein belongs to the nitrobindin family.

The protein is Ferric nitrobindin-like protein of Corynebacterium efficiens (strain DSM 44549 / YS-314 / AJ 12310 / JCM 11189 / NBRC 100395).